Here is an 827-residue protein sequence, read N- to C-terminus: Valine--tRNA ligase (827 aa).

Positions 41–51 (PNVTGQLHLGH) match the 'HIGH' region motif. The 'KMSKS' region signature appears at 511–515 (KMTKS). Lys514 serves as a coordination point for ATP. A coiled-coil region spans residues 765–827 (ENLSKEKAQK…KELLDEKIIE (63 aa)).

The protein belongs to the class-I aminoacyl-tRNA synthetase family. ValS type 1 subfamily. In terms of assembly, monomer.

The protein resides in the cytoplasm. The enzyme catalyses tRNA(Val) + L-valine + ATP = L-valyl-tRNA(Val) + AMP + diphosphate. Its function is as follows. Catalyzes the attachment of valine to tRNA(Val). As ValRS can inadvertently accommodate and process structurally similar amino acids such as threonine, to avoid such errors, it has a 'posttransfer' editing activity that hydrolyzes mischarged Thr-tRNA(Val) in a tRNA-dependent manner. The chain is Valine--tRNA ligase from Mycoplasmopsis pulmonis (strain UAB CTIP) (Mycoplasma pulmonis).